Here is a 251-residue protein sequence, read N- to C-terminus: Probable transcriptional regulatory protein SYNPCC7002_A0851 (251 aa).

The Response regulatory domain maps to 20-141; that stretch reads RILVVEDEAV…ELVARCRALL (122 aa). D76 carries the post-translational modification 4-aspartylphosphate. Positions 153-251 form a DNA-binding region, ompR/PhoB-type; that stretch reads NSVRQFKDIS…TVRGFGYRFG (99 aa).

In terms of processing, phosphorylation.

The chain is Probable transcriptional regulatory protein SYNPCC7002_A0851 from Picosynechococcus sp. (strain ATCC 27264 / PCC 7002 / PR-6) (Agmenellum quadruplicatum).